The sequence spans 160 residues: Phosphopantetheine adenylyltransferase (160 aa).

Threonine 10 is a binding site for substrate. ATP contacts are provided by residues threonine 10 to phenylalanine 11 and histidine 18. Substrate is bound by residues lysine 42, leucine 74, and arginine 88. Residues glycine 89–arginine 91, glutamate 99, and asparagine 124–threonine 130 contribute to the ATP site.

This sequence belongs to the bacterial CoaD family. Homohexamer. Requires Mg(2+) as cofactor.

It is found in the cytoplasm. It carries out the reaction (R)-4'-phosphopantetheine + ATP + H(+) = 3'-dephospho-CoA + diphosphate. Its pathway is cofactor biosynthesis; coenzyme A biosynthesis; CoA from (R)-pantothenate: step 4/5. Reversibly transfers an adenylyl group from ATP to 4'-phosphopantetheine, yielding dephospho-CoA (dPCoA) and pyrophosphate. The protein is Phosphopantetheine adenylyltransferase of Pseudoalteromonas atlantica (strain T6c / ATCC BAA-1087).